A 275-amino-acid chain; its full sequence is Protein FAM210A (275 aa).

Residues 51–100 (KWLHSQPKQQDTATKTPVHDLPSGIQHQSEETSPSARSSISTDPSSIAEE) are disordered. Polar residues-rich tracts occupy residues 56–65 (QPKQQDTATK) and 75–95 (IQHQ…TDPS). One can recognise a DUF1279 domain in the interval 105 to 217 (DQSIGLLKRF…GYLSTPPLVK (113 aa)). Residues 124–144 (VLIPVHLVTSSIWFGSFYYAA) form a helical membrane-spanning segment. The stretch at 221–275 (QDRMEETKELFTEKMEETRDIISGKMEETKDRISEKLQETKDRVAFRKKKNEDME) forms a coiled coil.

Belongs to the FAM210 family.

It localises to the membrane. The protein localises to the mitochondrion. The protein resides in the cytoplasm. May play a role in the structure and strength of both muscle and bone. This chain is Protein FAM210A (fam210a), found in Xenopus laevis (African clawed frog).